We begin with the raw amino-acid sequence, 188 residues long: FUN14 domain-containing protein 1B (188 aa).

The helical transmembrane segment at 21 to 41 (VVNIDGNIFSIYVCFFVCFFF) threads the bilayer. The YXXL motif lies at 52–55 (YEVL). The next 3 membrane-spanning stretches (helical) occupy residues 82-102 (YSVATQIVIGGVSGWCAGFLF), 109-129 (AATAVGGGFLLLQIASHGGYI), and 167-187 (FFKKNIVVSGGFVGGFLIGLA).

The protein belongs to the FUN14 family.

It is found in the mitochondrion outer membrane. Its function is as follows. Acts as an activator of hypoxia-induced mitophagy, an important mechanism for mitochondrial quality control. This is FUN14 domain-containing protein 1B (fundc1-b) from Xenopus laevis (African clawed frog).